Reading from the N-terminus, the 743-residue chain is Probable TonB-dependent siderophore receptor PiuA (743 aa).

An N-terminal signal peptide occupies residues 1 to 28 (MSLIRTRKKIVSSAIASSLSMIATTAMA). One can recognise a TBDR plug domain in the interval 61–167 (PLLDTPKSVS…VGGSINMISK (107 aa)). A TBDR beta-barrel domain is found at 172–743 (GDFLEGSVAA…SAVLAVNFKY (572 aa)). Intrachain disulfides connect cysteine 408/cysteine 416 and cysteine 627/cysteine 632.

This sequence belongs to the TonB-dependent receptor family.

Its subcellular location is the cell outer membrane. Functionally, probably involved in the initial step of iron uptake by binding iron chelating siderophores, thereby allowing extraction of iron from the environment. May bind the siderophore, ferric enterobactin, with micromolar affinity. The polypeptide is Probable TonB-dependent siderophore receptor PiuA (Acinetobacter baumannii (strain ATCC 19606 / DSM 30007 / JCM 6841 / CCUG 19606 / CIP 70.34 / NBRC 109757 / NCIMB 12457 / NCTC 12156 / 81)).